A 465-amino-acid polypeptide reads, in one-letter code: Poly(A) polymerase I (465 aa).

Active-site residues include Asp-80, Asp-82, and Asp-162. The interval 429 to 465 (SAPPDQKGMLNELDEEPSPRRRTRRPRKRAPRREGTA) is disordered. Basic residues predominate over residues 448–459 (RRRTRRPRKRAP).

The protein belongs to the tRNA nucleotidyltransferase/poly(A) polymerase family.

It carries out the reaction RNA(n) + ATP = RNA(n)-3'-adenine ribonucleotide + diphosphate. Functionally, adds poly(A) tail to the 3' end of many RNAs, which usually targets these RNAs for decay. Plays a significant role in the global control of gene expression, through influencing the rate of transcript degradation, and in the general RNA quality control. This Escherichia coli O157:H7 protein is Poly(A) polymerase I.